Here is a 903-residue protein sequence, read N- to C-terminus: Cell division cycle protein 48 homolog MJ1156 (903 aa).

ATP contacts are provided by residues 220-227 (GPPGTGKT) and 493-500 (GPPGTGKT).

This sequence belongs to the AAA ATPase family. CDC48 subfamily.

This is Cell division cycle protein 48 homolog MJ1156 from Methanocaldococcus jannaschii (strain ATCC 43067 / DSM 2661 / JAL-1 / JCM 10045 / NBRC 100440) (Methanococcus jannaschii).